Reading from the N-terminus, the 327-residue chain is Biotin synthase (327 aa).

Residues 48–278 (YCGDGVGLCM…DRHITVCGGR (231 aa)) enclose the Radical SAM core domain. Residues Cys-66, Cys-70, and Cys-73 each coordinate [4Fe-4S] cluster. The [2Fe-2S] cluster site is built by Ser-143 and Cys-203.

This sequence belongs to the radical SAM superfamily. Biotin synthase family. In terms of assembly, homodimer. [4Fe-4S] cluster serves as cofactor. The cofactor is [2Fe-2S] cluster.

It catalyses the reaction (4R,5S)-dethiobiotin + (sulfur carrier)-SH + 2 reduced [2Fe-2S]-[ferredoxin] + 2 S-adenosyl-L-methionine = (sulfur carrier)-H + biotin + 2 5'-deoxyadenosine + 2 L-methionine + 2 oxidized [2Fe-2S]-[ferredoxin]. Its pathway is cofactor biosynthesis; biotin biosynthesis; biotin from 7,8-diaminononanoate: step 2/2. Its function is as follows. Catalyzes the conversion of dethiobiotin (DTB) to biotin by the insertion of a sulfur atom into dethiobiotin via a radical-based mechanism. This chain is Biotin synthase, found in Syntrophotalea carbinolica (strain DSM 2380 / NBRC 103641 / GraBd1) (Pelobacter carbinolicus).